The sequence spans 125 residues: uncharacterized protein (125 aa).

A helical transmembrane segment spans residues 100–120 (YFKVAFALAVLTPLAIWIFYI).

It localises to the membrane. This is an uncharacterized protein from Saccharomyces cerevisiae (strain ATCC 204508 / S288c) (Baker's yeast).